We begin with the raw amino-acid sequence, 122 residues long: Large ribosomal subunit protein uL14 (122 aa).

Belongs to the universal ribosomal protein uL14 family. In terms of assembly, part of the 50S ribosomal subunit. Forms a cluster with proteins L3 and L19. In the 70S ribosome, L14 and L19 interact and together make contacts with the 16S rRNA in bridges B5 and B8.

Functionally, binds to 23S rRNA. Forms part of two intersubunit bridges in the 70S ribosome. In Streptomyces avermitilis (strain ATCC 31267 / DSM 46492 / JCM 5070 / NBRC 14893 / NCIMB 12804 / NRRL 8165 / MA-4680), this protein is Large ribosomal subunit protein uL14.